Consider the following 77-residue polypeptide: Conotoxin Cl6.15 (77 aa).

Positions 1–19 (MKLSVKFLLFLMILPLIAG) are cleaved as a signal peptide. A propeptide spanning residues 20–37 (EDMSDNDAPKSVDVQRNV) is cleaved from the precursor. 3 disulfides stabilise this stretch: Cys49–Cys61, Cys55–Cys66, and Cys60–Cys75.

Belongs to the conotoxin I1 superfamily. As to expression, expressed by the venom duct.

It localises to the secreted. This is Conotoxin Cl6.15 from Californiconus californicus (California cone).